Here is a 239-residue protein sequence, read N- to C-terminus: Serine protease SplC (239 aa).

The N-terminal stretch at 1–36 (MNKNIVIKSMAALAILTSVTGINAAVVEETQQIANA) is a signal peptide. Catalysis depends on charge relay system residues His75, Asp113, and Ser193.

It belongs to the peptidase S1B family.

It localises to the secreted. In Staphylococcus aureus, this protein is Serine protease SplC (splC).